We begin with the raw amino-acid sequence, 277 residues long: Bifunctional protein FolD (277 aa).

NADP(+)-binding positions include 160 to 162 (GAS), serine 185, and isoleucine 226.

The protein belongs to the tetrahydrofolate dehydrogenase/cyclohydrolase family. As to quaternary structure, homodimer.

The catalysed reaction is (6R)-5,10-methylene-5,6,7,8-tetrahydrofolate + NADP(+) = (6R)-5,10-methenyltetrahydrofolate + NADPH. The enzyme catalyses (6R)-5,10-methenyltetrahydrofolate + H2O = (6R)-10-formyltetrahydrofolate + H(+). The protein operates within one-carbon metabolism; tetrahydrofolate interconversion. Functionally, catalyzes the oxidation of 5,10-methylenetetrahydrofolate to 5,10-methenyltetrahydrofolate and then the hydrolysis of 5,10-methenyltetrahydrofolate to 10-formyltetrahydrofolate. The protein is Bifunctional protein FolD of Vesicomyosocius okutanii subsp. Calyptogena okutanii (strain HA).